The primary structure comprises 191 residues: Protein Ves (191 aa).

The protein belongs to the Ves family.

The protein is Protein Ves of Escherichia coli (strain SMS-3-5 / SECEC).